The sequence spans 340 residues: Protein AC11 (340 aa).

Functionally, plays an essential role in nucleocapsid egress from the host nucleus to form the budded virion (BV). Does not participate in nucleocapsid formation. This Autographa californica nuclear polyhedrosis virus (AcMNPV) protein is Protein AC11.